A 1527-amino-acid polypeptide reads, in one-letter code: uncharacterized protein (1527 aa).

Coiled-coil stretches lie at residues 262–293, 699–751, 905–932, and 1217–1255; these read NVEI…NINE, QQQQ…SEKL, NNLN…ENQI, and KIIS…QKSS. Positions 683–734 are disordered; the sequence is TNQEQEQDQQDQPPPPQQQQEQQQEQQQQQEQQQQQDQQQQDQQQDQQEKQQ. Low complexity predominate over residues 700–728; it reads QQQEQQQEQQQQQEQQQQQDQQQQDQQQD.

This is an uncharacterized protein from Dictyostelium discoideum (Social amoeba).